The following is a 601-amino-acid chain: Probable inactive receptor kinase At1g27190 (601 aa).

A signal peptide spans 1 to 24 (MKKIFITLLWLLFISSFLCSSSSA). Asn-52 carries an N-linked (GlcNAc...) asparagine glycan. 5 LRR repeats span residues 73–95 (RIIS…LKLC), 97–119 (SLQS…ICSW), 122–144 (YLVT…IVEC), 146–169 (FLNA…SRLD), and 170–192 (RLRR…LARF). A helical membrane pass occupies residues 221–241 (IIIVAGVLGAVGSLCVGLVIF). Thr-298 carries the phosphothreonine modification. The Protein kinase domain occupies 301–586 (FSSGNIDVSS…KNMADKHGVS (286 aa)). ATP contacts are provided by residues 307–315 (DVSSRTGVS) and Lys-329. Position 383 is a phosphoserine (Ser-383). The residue at position 399 (Thr-399) is a Phosphothreonine. Position 476 is a phosphotyrosine (Tyr-476). Ser-478 carries the phosphoserine modification. At Thr-479 the chain carries Phosphothreonine. Residues Ser-483 and Ser-586 each carry the phosphoserine modification.

The protein belongs to the protein kinase superfamily. Ser/Thr protein kinase family.

Its subcellular location is the membrane. This Arabidopsis thaliana (Mouse-ear cress) protein is Probable inactive receptor kinase At1g27190.